The primary structure comprises 260 residues: Proteasome subunit alpha (260 aa).

Residues 241–260 (VEEEEVKEKEEDYSELDSHY) are disordered.

It belongs to the peptidase T1A family. In terms of assembly, the 20S proteasome core is composed of 14 alpha and 14 beta subunits that assemble into four stacked heptameric rings, resulting in a barrel-shaped structure. The two inner rings, each composed of seven catalytic beta subunits, are sandwiched by two outer rings, each composed of seven alpha subunits. The catalytic chamber with the active sites is on the inside of the barrel. Has a gated structure, the ends of the cylinder being occluded by the N-termini of the alpha-subunits. Is capped at one or both ends by the proteasome regulatory ATPase, PAN.

The protein localises to the cytoplasm. Its activity is regulated as follows. The formation of the proteasomal ATPase PAN-20S proteasome complex, via the docking of the C-termini of PAN into the intersubunit pockets in the alpha-rings, triggers opening of the gate for substrate entry. Interconversion between the open-gate and close-gate conformations leads to a dynamic regulation of the 20S proteasome proteolysis activity. Component of the proteasome core, a large protease complex with broad specificity involved in protein degradation. The protein is Proteasome subunit alpha of Pyrococcus horikoshii (strain ATCC 700860 / DSM 12428 / JCM 9974 / NBRC 100139 / OT-3).